Reading from the N-terminus, the 480-residue chain is MAVTRIGLAGLAVMGQNLALNIAEKGFPISVYNRTTSKVDETVQRAKVEGNLPVYGFHDPASFVNSIQKPRVVIMLVKAGAPVDQTIATLAAHLEQGDCIIDGGNEWYENTERREKAMEERGLLYLGMGVSGGEEGARNGPSLMPGGSFEAYKYIEDILLKVAAQVPDSGPCVTYIGKGGSGNFVKMVHNGIEYGDMQLISEAYDVLKSVGKLTNSELQQVFSEWNKGELLSFLIEITADIFSIKDDQGSGHLVDKVLDKTGMKGTGKWTVQQAAELSVAAPTIEASLDSRFLSGLKDERVEAAKVFQGDFSSNLPVDKAQLIEDVRQALYASKICSYAQGMNIIKAKSMEKGWSLNLGELARIWKGGCIIRAIFLDRIKKAYDRNSDLANLLVDPEFAQEIMDRQAAWRRVVCLAINNGVSTPGMSASLAYFDSYRRDRLPANLVQAQRDYFGAHTYERVDMPGSFHTEWFKIARAAKM.

NADP(+) contacts are provided by residues 10–15, 33–35, 77–79, and Asn105; these read GLAVMG, NRT, and VKA. Substrate contacts are provided by residues Asn105 and 131-133; that span reads SGG. Lys186 (proton acceptor) is an active-site residue. Position 189–190 (189–190) interacts with substrate; that stretch reads HN. Catalysis depends on Glu193, which acts as the Proton donor. Tyr194, Lys264, Arg291, Arg450, and His456 together coordinate substrate.

Belongs to the 6-phosphogluconate dehydrogenase family. In terms of assembly, homodimer. Highly expressed in inflorescence, lowly expressed in root and embryos and almost absent in leaves.

The protein resides in the cytoplasm. The catalysed reaction is 6-phospho-D-gluconate + NADP(+) = D-ribulose 5-phosphate + CO2 + NADPH. It functions in the pathway carbohydrate degradation; pentose phosphate pathway; D-ribulose 5-phosphate from D-glucose 6-phosphate (oxidative stage): step 3/3. Catalyzes the oxidative decarboxylation of 6-phosphogluconate to ribulose 5-phosphate and CO(2), with concomitant reduction of NADP to NADPH. The polypeptide is 6-phosphogluconate dehydrogenase, decarboxylating 1 (G6PGH1) (Oryza sativa subsp. japonica (Rice)).